We begin with the raw amino-acid sequence, 630 residues long: tRNA uridine 5-carboxymethylaminomethyl modification enzyme MnmG (630 aa).

Residues 14 to 19, Val126, and Ser181 each bind FAD; that span reads GAGHAG. 273–287 serves as a coordination point for NAD(+); the sequence is GPRYCPSIEDKVVRF. Gln370 serves as a coordination point for FAD.

This sequence belongs to the MnmG family. As to quaternary structure, homodimer. Heterotetramer of two MnmE and two MnmG subunits. FAD is required as a cofactor.

It localises to the cytoplasm. Functionally, NAD-binding protein involved in the addition of a carboxymethylaminomethyl (cmnm) group at the wobble position (U34) of certain tRNAs, forming tRNA-cmnm(5)s(2)U34. This is tRNA uridine 5-carboxymethylaminomethyl modification enzyme MnmG from Alkaliphilus metalliredigens (strain QYMF).